The primary structure comprises 220 residues: Iron-sulfur cluster repair protein YtfE (220 aa).

It belongs to the RIC family. YtfE subfamily. As to quaternary structure, homodimer.

It is found in the cytoplasm. Functionally, di-iron-containing protein involved in the repair of iron-sulfur clusters damaged by oxidative and nitrosative stress conditions. The sequence is that of Iron-sulfur cluster repair protein YtfE from Escherichia coli O6:K15:H31 (strain 536 / UPEC).